The primary structure comprises 65 residues: 7 kDa A-type inclusion protein (65 aa).

Polar residues predominate over residues 1–20; that stretch reads MSNQNIPQLSEYQTSVSQVA. Positions 1–31 are disordered; that stretch reads MSNQNIPQLSEYQTSVSQVAVTPPPKPETPQ.

The protein is 7 kDa A-type inclusion protein of Vaccinia virus (strain Copenhagen) (VACV).